The chain runs to 712 residues: Sesterterpene synthase btcA (712 aa).

Positions 1–332 are terpene cyclase; sequence MTTIWEHCVD…CANCPRHHAW (332 aa). Residue aspartate 96 participates in Mg(2+) binding. Substrate contacts are provided by residues aspartate 96, asparagine 234, 238-242, and 328-329; these read SWDRE and RH. Positions 96 to 100 match the DDXXD 1 motif; the sequence is DDLCD. The NSE/DTE motif lies at 234-242; that stretch reads NDYWSWDRE. The tract at residues 333–706 is prenyltransferase; that stretch reads RDEESSPSER…VMRIVLSRLS (374 aa). The segment at 334 to 373 is disordered; sequence DEESSPSERSFSPSNEGIEDPRLSPGASTTSSMSQKSSPA. Low complexity-rich tracts occupy residues 340–349 and 361–373; these read SERSFSPSNE and STTS…SSPA. Residues lysine 414, arginine 417, and histidine 446 each contribute to the isopentenyl diphosphate site. 2 residues coordinate Mg(2+): aspartate 453 and aspartate 457. The short motif at 453–457 is the DDXXD 2 element; that stretch reads DDIED. Residue arginine 462 participates in dimethylallyl diphosphate binding. Arginine 463 contacts isopentenyl diphosphate. Dimethylallyl diphosphate-binding residues include lysine 540, threonine 541, glutamine 580, asparagine 587, lysine 597, and lysine 607.

The protein in the N-terminal section; belongs to the terpene synthase family. It in the C-terminal section; belongs to the FPP/GGPP synthase family. Hexamer. It depends on Mg(2+) as a cofactor.

The enzyme catalyses isopentenyl diphosphate + (2E,6E)-farnesyl diphosphate = (2E,6E,10E)-geranylgeranyl diphosphate + diphosphate. It carries out the reaction isopentenyl diphosphate + (2E,6E,10E)-geranylgeranyl diphosphate = (2E,6E,10E,14E)-geranylfarnesyl diphosphate + diphosphate. It functions in the pathway secondary metabolite biosynthesis; terpenoid biosynthesis. Its function is as follows. Bifunctional terpene synthase; part of the gene cluster that mediates the biosynthesis of betaestacins. The bifunctional terpene synthase btcA converts isopentenyl diphosphate (IPP) and dimethylallyl diphosphate (DMAPP) into the sesterterpene betaestacin I. The C-terminal prenyltransferase (PT) domain of btcA catalyzes formation of GFPP, whereas the N-terminal terpene cyclase (TC) domain catalyzes the cyclization of GFPP into betaestacin I. The cytochrome P450 monooxygenase btcB oxidizes the C25 methyl group of betaestacin I to yield the carboxylic acid betaestacin IV via the alcohol betaestacin III. The cytochrome P450 monooxygenase btcC further catalyzes the multistep oxidation of betaestacin IV to produce several compounds, including betaestacins Va, Vb, Vc and VI. This chain is Sesterterpene synthase btcA, found in Colletotrichum orbiculare (strain 104-T / ATCC 96160 / CBS 514.97 / LARS 414 / MAFF 240422) (Cucumber anthracnose fungus).